A 63-amino-acid chain; its full sequence is UPF0434 protein BAV2101 (63 aa).

Belongs to the UPF0434 family.

The chain is UPF0434 protein BAV2101 from Bordetella avium (strain 197N).